Reading from the N-terminus, the 340-residue chain is Tetraacyldisaccharide 4'-kinase (340 aa).

51 to 58 (HMGGAGKT) contacts ATP.

This sequence belongs to the LpxK family.

It carries out the reaction a lipid A disaccharide + ATP = a lipid IVA + ADP + H(+). It functions in the pathway glycolipid biosynthesis; lipid IV(A) biosynthesis; lipid IV(A) from (3R)-3-hydroxytetradecanoyl-[acyl-carrier-protein] and UDP-N-acetyl-alpha-D-glucosamine: step 6/6. In terms of biological role, transfers the gamma-phosphate of ATP to the 4'-position of a tetraacyldisaccharide 1-phosphate intermediate (termed DS-1-P) to form tetraacyldisaccharide 1,4'-bis-phosphate (lipid IVA). The protein is Tetraacyldisaccharide 4'-kinase of Rhodopseudomonas palustris (strain TIE-1).